Here is a 392-residue protein sequence, read N- to C-terminus: Odorant receptor 9a (392 aa).

At 1-41 (MSDKVKGKKQEEKDQSLRVQILVYRCMGIDLWSPTMANDRP) the chain is on the cytoplasmic side. A helical transmembrane segment spans residues 42 to 62 (WLTFVTMGPLFLFMVPMFLAA). Topologically, residues 63–74 (HEYITQVSLLSD) are extracellular. A helical transmembrane segment spans residues 75–95 (TLGSTFASMLTLVKFLLFCYH). Over 96–141 (RKEFVGLIYHIRAILAKEIEVWPDAREIIEVENQSDQMLSLTYTRC) the chain is Cytoplasmic. A helical transmembrane segment spans residues 142–162 (FGLAGIFAALKPFVGIILSSI). Residues 163–202 (RGDEIHLELPHNGVYPYDLQVVMFYVPTYLWNVMASYSAV) are Extracellular-facing. The chain crosses the membrane as a helical span at residues 203–223 (TMALCVDSLLFFFTYNVCAIF). Residues 224-268 (KIAKHRMIHLPAVGGKEELEGLVQVLLLHQKGLQIADHIADKYRP) lie on the Cytoplasmic side of the membrane. Residues 269-289 (LIFLQFFLSALQICFIGFQVA) traverse the membrane as a helical segment. The Extracellular portion of the chain corresponds to 290-297 (DLFPNPQS). A helical transmembrane segment spans residues 298-318 (LYFIAFVGSLLIALFIYSKCG). At 319–362 (ENIKSASLDFGNGLYETNWTDFSPPTKRALLIAAMRAQRPCQMK) the chain is on the cytoplasmic side. Residues 363 to 383 (GYFFEASMATFSTIVRSAVSY) form a helical membrane-spanning segment. Residues 384-392 (IMMLRSFNA) lie on the Extracellular side of the membrane.

It belongs to the insect chemoreceptor superfamily. Heteromeric odorant receptor channel (TC 1.A.69) family. Or1a subfamily. As to quaternary structure, interacts with Orco. Complexes exist early in the endomembrane system in olfactory sensory neurons (OSNs), coupling these complexes to the conserved ciliary trafficking pathway. As to expression, expressed in olfactory sensory neurons in the antenna.

The protein resides in the cell membrane. Functionally, odorant receptor which mediates acceptance or avoidance behavior, depending on its substrates. The odorant receptor repertoire encodes a large collection of odor stimuli that vary widely in identity, intensity, and duration. May form a complex with Orco to form odorant-sensing units, providing sensitive and prolonged odorant signaling and calcium permeability. The sequence is that of Odorant receptor 9a (Or9a) from Drosophila melanogaster (Fruit fly).